Reading from the N-terminus, the 416-residue chain is Meiotically up-regulated protein PB1A10.08 (416 aa).

Its subcellular location is the cytoplasm. May have a role in meiosis and sporulation. This chain is Meiotically up-regulated protein PB1A10.08, found in Schizosaccharomyces pombe (strain 972 / ATCC 24843) (Fission yeast).